The primary structure comprises 315 residues: Aspartate carbamoyltransferase catalytic subunit (315 aa).

Carbamoyl phosphate contacts are provided by Arg-54 and Thr-55. Residue Lys-82 coordinates L-aspartate. Positions 104, 134, and 137 each coordinate carbamoyl phosphate. Positions 174 and 229 each coordinate L-aspartate. Residues Gly-270 and Pro-271 each contribute to the carbamoyl phosphate site.

The protein belongs to the aspartate/ornithine carbamoyltransferase superfamily. ATCase family. Heterododecamer (2C3:3R2) of six catalytic PyrB chains organized as two trimers (C3), and six regulatory PyrI chains organized as three dimers (R2).

It carries out the reaction carbamoyl phosphate + L-aspartate = N-carbamoyl-L-aspartate + phosphate + H(+). It functions in the pathway pyrimidine metabolism; UMP biosynthesis via de novo pathway; (S)-dihydroorotate from bicarbonate: step 2/3. Catalyzes the condensation of carbamoyl phosphate and aspartate to form carbamoyl aspartate and inorganic phosphate, the committed step in the de novo pyrimidine nucleotide biosynthesis pathway. The chain is Aspartate carbamoyltransferase catalytic subunit from Leifsonia xyli subsp. xyli (strain CTCB07).